We begin with the raw amino-acid sequence, 308 residues long: Probable plastid-lipid-associated protein 9, chloroplastic (308 aa).

Residues 1 to 55 (MALIQHGSVSGTSAVRLSFSSSVSPPSSSPPLSRVSLNFQSEKKSCYRRMICRAM) constitute a chloroplast transit peptide.

The protein belongs to the PAP/fibrillin family.

It is found in the plastid. The protein localises to the chloroplast. Its subcellular location is the plastoglobule. The protein is Probable plastid-lipid-associated protein 9, chloroplastic (PAP9) of Arabidopsis thaliana (Mouse-ear cress).